Consider the following 378-residue polypeptide: Erythronate-4-phosphate dehydrogenase (378 aa).

Substrate is bound by residues S45 and T66. Residues D146 and T175 each coordinate NAD(+). R208 is an active-site residue. D232 contacts NAD(+). E237 is a catalytic residue. Residue H254 is the Proton donor of the active site. G257 provides a ligand contact to NAD(+). Residue Y258 coordinates substrate.

It belongs to the D-isomer specific 2-hydroxyacid dehydrogenase family. PdxB subfamily. As to quaternary structure, homodimer.

It localises to the cytoplasm. It carries out the reaction 4-phospho-D-erythronate + NAD(+) = (R)-3-hydroxy-2-oxo-4-phosphooxybutanoate + NADH + H(+). Its pathway is cofactor biosynthesis; pyridoxine 5'-phosphate biosynthesis; pyridoxine 5'-phosphate from D-erythrose 4-phosphate: step 2/5. Its function is as follows. Catalyzes the oxidation of erythronate-4-phosphate to 3-hydroxy-2-oxo-4-phosphonooxybutanoate. This is Erythronate-4-phosphate dehydrogenase from Citrobacter koseri (strain ATCC BAA-895 / CDC 4225-83 / SGSC4696).